Here is a 492-residue protein sequence, read N- to C-terminus: Phosphatidylinositol 4-kinase type 2-beta (492 aa).

Positions 1 to 11 (MEPKQTADARD) are enriched in basic and acidic residues. The tract at residues 1–98 (MEPKQTADAR…SDRENMSGGH (98 aa)) is disordered. One can recognise a PI3K/PI4K catalytic domain in the interval 127-462 (GVFPERISQG…VQMPRVVVER (336 aa)). The tract at residues 133–139 (ISQGSSG) is G-loop. The ATP site is built by Ser140 and Lys155. Residues 160–162 (EPY) form an important for substrate binding region. The important for interaction with membranes stretch occupies residues 168–181 (KWTKYFHKICCPCC). Residues 264–267 (QLFV) and 278–279 (RK) contribute to the ATP site. Residues 271 to 279 (KEADYWLRK) are important for interaction with membranes. The catalytic loop stretch occupies residues 308-316 (RNTDRGNDN). Residues 353–373 (AIDNGLAFPFKHPDEWRAYPF) form an activation loop region. An ATP-binding site is contributed by Asp355. Positions 368–377 (WRAYPFHWAW) are important for interaction with membranes.

Belongs to the PI3/PI4-kinase family. Type II PI4K subfamily.

Its subcellular location is the cytoplasm. It is found in the cytosol. The protein resides in the golgi apparatus membrane. It localises to the endoplasmic reticulum membrane. The protein localises to the cell membrane. Its subcellular location is the early endosome membrane. The catalysed reaction is a 1,2-diacyl-sn-glycero-3-phospho-(1D-myo-inositol) + ATP = a 1,2-diacyl-sn-glycero-3-phospho-(1D-myo-inositol 4-phosphate) + ADP + H(+). Contributes to the overall PI4-kinase activity of the cell. This contribution may be especially significant in plasma membrane, endosomal and Golgi compartments. The phosphorylation of phosphatidylinositol (PI) to PI4P is the first committed step in the generation of phosphatidylinositol 4,5-bisphosphate (PIP2), a precursor of the second messenger inositol 1,4,5-trisphosphate (InsP3). The chain is Phosphatidylinositol 4-kinase type 2-beta (pi4k2b) from Xenopus tropicalis (Western clawed frog).